Here is a 276-residue protein sequence, read N- to C-terminus: Dermonecrotic toxin LlSicTox-alphaIV2iv (276 aa).

The active site involves His-5. Glu-25 and Asp-27 together coordinate Mg(2+). The active-site Nucleophile is His-41. Cystine bridges form between Cys-45/Cys-51 and Cys-47/Cys-193. Asp-85 serves as a coordination point for Mg(2+).

This sequence belongs to the arthropod phospholipase D family. Class II subfamily. Mg(2+) is required as a cofactor. As to expression, expressed by the venom gland.

It is found in the secreted. It catalyses the reaction an N-(acyl)-sphingosylphosphocholine = an N-(acyl)-sphingosyl-1,3-cyclic phosphate + choline. The enzyme catalyses an N-(acyl)-sphingosylphosphoethanolamine = an N-(acyl)-sphingosyl-1,3-cyclic phosphate + ethanolamine. It carries out the reaction a 1-acyl-sn-glycero-3-phosphocholine = a 1-acyl-sn-glycero-2,3-cyclic phosphate + choline. The catalysed reaction is a 1-acyl-sn-glycero-3-phosphoethanolamine = a 1-acyl-sn-glycero-2,3-cyclic phosphate + ethanolamine. Dermonecrotic toxins cleave the phosphodiester linkage between the phosphate and headgroup of certain phospholipids (sphingolipid and lysolipid substrates), forming an alcohol (often choline) and a cyclic phosphate. This toxin acts on sphingomyelin (SM). It may also act on ceramide phosphoethanolamine (CPE), lysophosphatidylcholine (LPC) and lysophosphatidylethanolamine (LPE), but not on lysophosphatidylserine (LPS), and lysophosphatidylglycerol (LPG). It acts by transphosphatidylation, releasing exclusively cyclic phosphate products as second products. Induces dermonecrosis, hemolysis, increased vascular permeability, edema, inflammatory response, and platelet aggregation. The chain is Dermonecrotic toxin LlSicTox-alphaIV2iv from Loxosceles laeta (South American recluse spider).